A 270-amino-acid chain; its full sequence is tRNA pseudouridine synthase A (270 aa).

Asp-60 serves as the catalytic Nucleophile. An RNA binding region spans residues Phe-107–Phe-111. Tyr-118 contributes to the substrate binding site. The interaction with tRNA stretch occupies residues Gln-168 to Arg-172.

It belongs to the tRNA pseudouridine synthase TruA family. Homodimer.

The catalysed reaction is uridine(38/39/40) in tRNA = pseudouridine(38/39/40) in tRNA. In terms of biological role, formation of pseudouridine at positions 38, 39 and 40 in the anticodon stem and loop of transfer RNAs. The chain is tRNA pseudouridine synthase A from Klebsiella pneumoniae (strain 342).